The following is a 763-amino-acid chain: Protein translocase subunit SecA 2 (763 aa).

Residues Gln-83, Gly-101–Thr-105, and Asp-490 contribute to the ATP site.

The protein belongs to the SecA family. Monomer and homodimer. Part of the essential Sec protein translocation apparatus which comprises SecA, SecYEG and auxiliary proteins SecDF. Other proteins may also be involved.

The protein localises to the cell membrane. Its subcellular location is the cytoplasm. The catalysed reaction is ATP + H2O + cellular proteinSide 1 = ADP + phosphate + cellular proteinSide 2.. In terms of biological role, part of the Sec protein translocase complex. Interacts with the SecYEG preprotein conducting channel. Has a central role in coupling the hydrolysis of ATP to the transfer of proteins into and across the cell membrane, serving as an ATP-driven molecular motor driving the stepwise translocation of polypeptide chains across the membrane. The sequence is that of Protein translocase subunit SecA 2 from Corynebacterium glutamicum (strain R).